Here is a 378-residue protein sequence, read N- to C-terminus: C-X-C chemokine receptor type 3-2 (378 aa).

Residues 1-47 (MDNSTTAAEVSAPTDYDYNSTSYDDDNPYAAPCSLTETWNFLGRFAP) are Extracellular-facing. 2 N-linked (GlcNAc...) asparagine glycosylation sites follow: Asn-3 and Asn-19. Residues 48–68 (VAYILVFILALVGNILVLCVI) traverse the membrane as a helical segment. The Cytoplasmic portion of the chain corresponds to 69 to 86 (RRYRQSRHSPCSFSLTDT). The helical transmembrane segment at 87–107 (FLLHLAVSDLLLAATLPFFAV) threads the bilayer. Residues 108–121 (EWISEWVFGKVMCK) are Extracellular-facing. A disulfide bond links Cys-120 and Cys-199. Residues 122-142 (ITGALFSLNVYCGVLFLACIS) form a helical membrane-spanning segment. At 143 to 164 (FDRYLAIVHAINISWRRKTCHA) the chain is on the cytoplasmic side. The chain crosses the membrane as a helical span at residues 165 to 185 (QLACAFIWVICLGLSMVDMHF). At 186-212 (RDLVEIPGMNRMVCQIVYSEQYSKQWQ) the chain is on the extracellular side. Residues 213-233 (IGMQLVSMVLGFILPLLVMLY) traverse the membrane as a helical segment. The Cytoplasmic portion of the chain corresponds to 234-253 (CYLHIFKALCHATRRQKRRS). Residues 254-274 (LRLIISLVIVFVISWAPYNAL) traverse the membrane as a helical segment. Topologically, residues 275-304 (RMTDSLQMLGVIVKSCALNNVLDVGILVTE) are extracellular. The helical transmembrane segment at 305-325 (SLGLAHCALNPLLYGLVGVKF) threads the bilayer. Over 326–378 (RRELAQMCKAALGPQGCLGLVGWANGRGSSTRRPTGSFSSVETENTSYFSVMA) the chain is Cytoplasmic.

The protein belongs to the G-protein coupled receptor 1 family.

Its subcellular location is the cell membrane. Functionally, receptor for the C-X-C chemokines cxcl11.1 and cxcl11.6. Promotes macrophage chemotaxis to sites of bacterial infection. The polypeptide is C-X-C chemokine receptor type 3-2 (Danio rerio (Zebrafish)).